A 122-amino-acid chain; its full sequence is Large ribosomal subunit protein uL14 (122 aa).

It belongs to the universal ribosomal protein uL14 family. Part of the 50S ribosomal subunit. Forms a cluster with proteins L3 and L19. In the 70S ribosome, L14 and L19 interact and together make contacts with the 16S rRNA in bridges B5 and B8.

Its function is as follows. Binds to 23S rRNA. Forms part of two intersubunit bridges in the 70S ribosome. This chain is Large ribosomal subunit protein uL14, found in Chlorobaculum tepidum (strain ATCC 49652 / DSM 12025 / NBRC 103806 / TLS) (Chlorobium tepidum).